A 317-amino-acid chain; its full sequence is NADH-quinone oxidoreductase subunit H 1 (317 aa).

The next 8 helical transmembrane spans lie at 7-27, 74-94, 107-127, 147-167, 179-199, 230-250, 257-277, and 297-317; these read IWVN…MLSW, AVFV…FAVV, IGVL…VLGG, LSYE…AGSF, LWFC…GIAE, FFIG…TLFF, VLPP…CFVL, and VMLP…LSVA.

Belongs to the complex I subunit 1 family. NDH-1 is composed of 14 different subunits. Subunits NuoA, H, J, K, L, M, N constitute the membrane sector of the complex.

It is found in the cell inner membrane. It carries out the reaction a quinone + NADH + 5 H(+)(in) = a quinol + NAD(+) + 4 H(+)(out). Functionally, NDH-1 shuttles electrons from NADH, via FMN and iron-sulfur (Fe-S) centers, to quinones in the respiratory chain. The immediate electron acceptor for the enzyme in this species is believed to be ubiquinone. Couples the redox reaction to proton translocation (for every two electrons transferred, four hydrogen ions are translocated across the cytoplasmic membrane), and thus conserves the redox energy in a proton gradient. This subunit may bind ubiquinone. The sequence is that of NADH-quinone oxidoreductase subunit H 1 from Nitrosospira multiformis (strain ATCC 25196 / NCIMB 11849 / C 71).